A 333-amino-acid chain; its full sequence is Quinolinate synthase (333 aa).

Residues histidine 41 and serine 58 each contribute to the iminosuccinate site. Residue cysteine 103 coordinates [4Fe-4S] cluster. Residues 129–131 and serine 146 each bind iminosuccinate; that span reads YIN. A [4Fe-4S] cluster-binding site is contributed by cysteine 189. Iminosuccinate contacts are provided by residues 215 to 217 and threonine 232; that span reads HPE. Cysteine 282 serves as a coordination point for [4Fe-4S] cluster.

This sequence belongs to the quinolinate synthase family. Type 2 subfamily. The cofactor is [4Fe-4S] cluster.

It localises to the cytoplasm. The enzyme catalyses iminosuccinate + dihydroxyacetone phosphate = quinolinate + phosphate + 2 H2O + H(+). Its pathway is cofactor biosynthesis; NAD(+) biosynthesis; quinolinate from iminoaspartate: step 1/1. Functionally, catalyzes the condensation of iminoaspartate with dihydroxyacetone phosphate to form quinolinate. The polypeptide is Quinolinate synthase (Prochlorococcus marinus (strain MIT 9313)).